The chain runs to 198 residues: uncharacterized protein (198 aa).

Positions 166–198 (GYEPDEKARKKRERVKRSEVEDQLKINVKPTRR) are disordered.

This is an uncharacterized protein from Coxiella burnetii (strain RSA 493 / Nine Mile phase I).